A 1154-amino-acid chain; its full sequence is CRISPR-associated endoribonuclease Cas13a (1154 aa).

2 HEPN-like fold regions span residues 330 to 466 and 923 to 1154; these read TTSN…RFIN and FVHL…EMKK.

It belongs to the CRISPR-associated endoribonuclease Cas13a family. Requires a divalent metal cation as cofactor.

With respect to regulation, target RNA acts as an activator for non-specific ssRNA degradation. Functionally, CRISPR (clustered regularly interspaced short palindromic repeat), is an adaptive immune system that provides protection against mobile genetic elements (viruses, transposable elements and conjugative plasmids). CRISPR clusters contain sequences complementary to antecedent mobile elements and target invading nucleic acids. Unlike many single-component effectors, this CRISPR-Cas system targets RNA. CRISPR clusters are transcribed from pre-CRISPR RNA (crRNA) and processed into crRNA by this protein. Cleaves linear target ssRNA in a pre-crRNA-dependent fashion, preferentially before U residues. Binding a viable target RNA target activates this protein for non-specific RNA degradation in vitro (called collateral RNA degradation), which is fairly sensitive as it requires picomolar levels of viable target RNA. This is CRISPR-associated endoribonuclease Cas13a from Paludibacter propionicigenes (strain DSM 17365 / JCM 13257 / WB4).